The following is a 372-amino-acid chain: Neuropeptide S receptor (372 aa).

Residues 1 to 52 are Extracellular-facing; sequence MPANLTEGSFHANQTVPMLDSSPVACTEIVTFTEALEAEEWGSFYSSFKTEQ. Asparagine 4 and asparagine 13 each carry an N-linked (GlcNAc...) asparagine glycan. The chain crosses the membrane as a helical span at residues 53–73; it reads LITLWVLFVFTIVGNSVVLFS. Over 74–82 the chain is Cytoplasmic; it reads TWRRKRKSR. The chain crosses the membrane as a helical span at residues 83–103; it reads MTFFVTQLAITDSFTGLINIL. Residues 104–122 lie on the Extracellular side of the membrane; it reads TDIIWRFTGDFMAPDLVCR. A disulfide bridge connects residues cysteine 121 and cysteine 198. The chain crosses the membrane as a helical span at residues 123–143; it reads IVRYLQVVLLYASTYVLVSLS. The Cytoplasmic segment spans residues 144–165; that stretch reads IDRYHAIVYPMKFLQGAEKQAK. Residues 166 to 186 traverse the membrane as a helical segment; that stretch reads VLIGIAWSLSFLFSIPTLIIF. Over 187-213 the chain is Extracellular; the sequence is GKRTLSNGEVQCWALWPDDSYWTPYMT. A helical membrane pass occupies residues 214–234; sequence IVAFLVYFIPLTIISVIYGLV. At 235-276 the chain is on the cytoplasmic side; it reads IRTIWIKSKAHETVISNCSDGELCCSYNRGLISKAKIKAIKY. A helical membrane pass occupies residues 277 to 297; that stretch reads SIVIILAFICCWSPYFLFDML. Over 298 to 313 the chain is Extracellular; sequence DNFNLLPDTKERFYAS. A helical membrane pass occupies residues 314 to 334; the sequence is VIIQNLPALNSAINPLIYCIF. At 335–372 the chain is on the cytoplasmic side; that stretch reads SGSLCSPCKVQRSQDSRMTYRERSERHEMQILSKPEFI.

It belongs to the G-protein coupled receptor 1 family. Vasopressin/oxytocin receptor subfamily.

Its subcellular location is the cell membrane. Its function is as follows. G-protein coupled receptor for neuropeptide S (NPS). Promotes mobilization of intracellular Ca(2+) stores. Inhibits cell growth in response to NPS binding. Involved in pathogenesis of asthma and other IgE-mediated diseases. This chain is Neuropeptide S receptor (Npsr1), found in Rattus norvegicus (Rat).